The chain runs to 362 residues: DNA replication and repair protein RecF (362 aa).

Residue 30 to 37 coordinates ATP; it reads GDNAQGKT.

It belongs to the RecF family.

It is found in the cytoplasm. The RecF protein is involved in DNA metabolism; it is required for DNA replication and normal SOS inducibility. RecF binds preferentially to single-stranded, linear DNA. It also seems to bind ATP. This chain is DNA replication and repair protein RecF, found in Agathobacter rectalis (strain ATCC 33656 / DSM 3377 / JCM 17463 / KCTC 5835 / VPI 0990) (Eubacterium rectale).